Here is a 344-residue protein sequence, read N- to C-terminus: 3-dehydroquinate synthase (344 aa).

Residues 60-65, 94-98, 118-119, lysine 131, lysine 140, and 158-161 each bind NAD(+); these read DGEEYK, GVISD, TT, and FLNT. Glutamate 173, histidine 232, and histidine 249 together coordinate Zn(2+).

This sequence belongs to the sugar phosphate cyclases superfamily. Dehydroquinate synthase family. It depends on Co(2+) as a cofactor. Zn(2+) serves as cofactor. Requires NAD(+) as cofactor.

It is found in the cytoplasm. The enzyme catalyses 7-phospho-2-dehydro-3-deoxy-D-arabino-heptonate = 3-dehydroquinate + phosphate. It participates in metabolic intermediate biosynthesis; chorismate biosynthesis; chorismate from D-erythrose 4-phosphate and phosphoenolpyruvate: step 2/7. Functionally, catalyzes the conversion of 3-deoxy-D-arabino-heptulosonate 7-phosphate (DAHP) to dehydroquinate (DHQ). The protein is 3-dehydroquinate synthase of Campylobacter hominis (strain ATCC BAA-381 / DSM 21671 / CCUG 45161 / LMG 19568 / NCTC 13146 / CH001A).